The chain runs to 375 residues: Chaperone protein DnaJ (375 aa).

The 64-residue stretch at 5 to 68 (DYYEILGVSK…KKRAQYDQFG (64 aa)) folds into the J domain. The segment at 135-217 (GISKNINYDR…CYGKKVINER (83 aa)) adopts a CR-type zinc-finger fold. Zn(2+) is bound by residues C148, C151, C165, C168, C191, C194, C205, and C208. 4 CXXCXGXG motif repeats span residues 148–155 (CHKCQGTG), 165–172 (CTKCHGRG), 191–198 (CHECEGTG), and 205–212 (CEQCYGKK).

Belongs to the DnaJ family. Homodimer. Zn(2+) serves as cofactor.

It is found in the cytoplasm. Functionally, participates actively in the response to hyperosmotic and heat shock by preventing the aggregation of stress-denatured proteins and by disaggregating proteins, also in an autonomous, DnaK-independent fashion. Unfolded proteins bind initially to DnaJ; upon interaction with the DnaJ-bound protein, DnaK hydrolyzes its bound ATP, resulting in the formation of a stable complex. GrpE releases ADP from DnaK; ATP binding to DnaK triggers the release of the substrate protein, thus completing the reaction cycle. Several rounds of ATP-dependent interactions between DnaJ, DnaK and GrpE are required for fully efficient folding. Also involved, together with DnaK and GrpE, in the DNA replication of plasmids through activation of initiation proteins. The polypeptide is Chaperone protein DnaJ (Ureaplasma parvum serovar 3 (strain ATCC 700970)).